The chain runs to 228 residues: ATP phosphoribosyltransferase (228 aa).

It belongs to the ATP phosphoribosyltransferase family. Short subfamily. In terms of assembly, heteromultimer composed of HisG and HisZ subunits.

Its subcellular location is the cytoplasm. The catalysed reaction is 1-(5-phospho-beta-D-ribosyl)-ATP + diphosphate = 5-phospho-alpha-D-ribose 1-diphosphate + ATP. The protein operates within amino-acid biosynthesis; L-histidine biosynthesis; L-histidine from 5-phospho-alpha-D-ribose 1-diphosphate: step 1/9. In terms of biological role, catalyzes the condensation of ATP and 5-phosphoribose 1-diphosphate to form N'-(5'-phosphoribosyl)-ATP (PR-ATP). Has a crucial role in the pathway because the rate of histidine biosynthesis seems to be controlled primarily by regulation of HisG enzymatic activity. In Moorella thermoacetica (strain ATCC 39073 / JCM 9320), this protein is ATP phosphoribosyltransferase.